We begin with the raw amino-acid sequence, 285 residues long: Probable endonuclease 4 (285 aa).

Residues H69, H109, E145, D179, H182, H216, D229, H231, and E261 each coordinate Zn(2+).

The protein belongs to the AP endonuclease 2 family. Zn(2+) is required as a cofactor.

The catalysed reaction is Endonucleolytic cleavage to 5'-phosphooligonucleotide end-products.. Endonuclease IV plays a role in DNA repair. It cleaves phosphodiester bonds at apurinic or apyrimidinic (AP) sites, generating a 3'-hydroxyl group and a 5'-terminal sugar phosphate. The protein is Probable endonuclease 4 of Shigella boydii serotype 18 (strain CDC 3083-94 / BS512).